The sequence spans 322 residues: Ferredoxin--NADP reductase (322 aa).

7 residues coordinate FAD: aspartate 33, glutamine 41, tyrosine 46, alanine 86, phenylalanine 120, aspartate 278, and serine 319.

This sequence belongs to the ferredoxin--NADP reductase type 2 family. In terms of assembly, homodimer. FAD is required as a cofactor.

The enzyme catalyses 2 reduced [2Fe-2S]-[ferredoxin] + NADP(+) + H(+) = 2 oxidized [2Fe-2S]-[ferredoxin] + NADPH. This Salinispora tropica (strain ATCC BAA-916 / DSM 44818 / JCM 13857 / NBRC 105044 / CNB-440) protein is Ferredoxin--NADP reductase.